Here is a 359-residue protein sequence, read N- to C-terminus: Peptide chain release factor 1 (359 aa).

Gln234 carries the N5-methylglutamine modification. The segment at 283–305 is disordered; sequence SQKDAARAADRRAQVGSGDRSER.

This sequence belongs to the prokaryotic/mitochondrial release factor family. Post-translationally, methylated by PrmC. Methylation increases the termination efficiency of RF1.

The protein localises to the cytoplasm. Functionally, peptide chain release factor 1 directs the termination of translation in response to the peptide chain termination codons UAG and UAA. This chain is Peptide chain release factor 1, found in Methylobacterium sp. (strain 4-46).